The primary structure comprises 299 residues: Phosphoribosylaminoimidazole-succinocarboxamide synthase (299 aa).

The disordered stretch occupies residues 259 to 279 (PESGWDRKSEQPPPPLPQHVV).

The protein belongs to the SAICAR synthetase family.

The enzyme catalyses 5-amino-1-(5-phospho-D-ribosyl)imidazole-4-carboxylate + L-aspartate + ATP = (2S)-2-[5-amino-1-(5-phospho-beta-D-ribosyl)imidazole-4-carboxamido]succinate + ADP + phosphate + 2 H(+). Its pathway is purine metabolism; IMP biosynthesis via de novo pathway; 5-amino-1-(5-phospho-D-ribosyl)imidazole-4-carboxamide from 5-amino-1-(5-phospho-D-ribosyl)imidazole-4-carboxylate: step 1/2. This chain is Phosphoribosylaminoimidazole-succinocarboxamide synthase, found in Streptomyces avermitilis (strain ATCC 31267 / DSM 46492 / JCM 5070 / NBRC 14893 / NCIMB 12804 / NRRL 8165 / MA-4680).